We begin with the raw amino-acid sequence, 199 residues long: GTP-binding protein Di-Ras2 (199 aa).

GTP is bound by residues 14–21 (GAGGVGKS), 33–39 (RESYIPT), 61–65 (DTTGS), and 121–124 (NKCD). At Ser-35 the chain carries Phosphoserine. The Effector region motif lies at 36-44 (YIPTVEDTY). Ser-126 carries the phosphoserine modification. 152-153 (AK) serves as a coordination point for GTP. Cys-196 is subject to Cysteine methyl ester. Cys-196 is lipidated: S-geranylgeranyl cysteine. A propeptide spans 197–199 (VVM) (removed in mature form).

This sequence belongs to the small GTPase superfamily. Di-Ras family. Ubiquitinated by the ECS(ASB11) complex via 'Lys-11'-linked ubiquitin chains, leading to its degradation by the proteasome.

It is found in the cell membrane. The enzyme catalyses GTP + H2O = GDP + phosphate + H(+). Displays low GTPase activity and exists predominantly in the GTP-bound form. The polypeptide is GTP-binding protein Di-Ras2 (Diras2) (Mus musculus (Mouse)).